We begin with the raw amino-acid sequence, 113 residues long: Transcription initiation factor IIA subunit 2 (113 aa).

The protein belongs to the TFIIA subunit 2 family. In terms of assembly, TFIIA is a heterodimer of the large unprocessed subunit 1 and a small subunit gamma. It was originally believed to be a heterotrimer of an alpha, a beta and a gamma subunit.

It localises to the nucleus. Its function is as follows. TFIIA is a component of the transcription machinery of RNA polymerase II and plays an important role in transcriptional activation. TFIIA in a complex with TBP mediates transcriptional activity. The chain is Transcription initiation factor IIA subunit 2 from Caenorhabditis elegans.